A 1247-amino-acid chain; its full sequence is uncharacterized protein (1247 aa).

Disordered stretches follow at residues 25–141 (KYNN…HSPP), 169–431 (AANN…QQPQ), 472–667 (QQQP…PSSS), 738–770 (NSNS…SEPI), 807–857 (YSNR…QNIE), 869–1087 (GKNF…NNNN), 1099–1122 (STLN…ESQQ), and 1139–1162 (QQQQ…KGDG). The span at 26 to 125 (YNNSNNYNNN…SNNSINSNSY (100 aa)) shows a compositional bias: low complexity. The segment covering 126-139 (KVNTPTQNGKSSHS) has biased composition (polar residues). Composition is skewed to low complexity over residues 169 to 178 (AANNGSSNSS), 185 to 223 (SNSN…NYNS), and 230 to 341 (NNNN…YSNS). Positions 342–356 (KYNQQKSYNNAPHQL) are enriched in polar residues. Composition is skewed to low complexity over residues 363–375 (NSYY…NNGN), 385–394 (GSGNSSNSNG), 409–431 (QSQS…QQPQ), and 472–484 (QQQP…QQQQ). Polar residues predominate over residues 511 to 522 (GLNNSLNGQTDL). 6 stretches are compositionally biased toward low complexity: residues 523-544 (NNSN…TNNN), 553-628 (YNYN…VGSN), 655-667 (TPSS…PSSS), 738-759 (NSNS…NNNH), 807-855 (YSNR…DSQN), and 871-928 (NFNN…ENNN). The segment covering 929 to 942 (GDVFSNGFSTWTPK) has biased composition (polar residues). A compositionally biased stretch (low complexity) spans 943-983 (SGSNSLNNSQNNLSNGQNSSNNSQNNLNNSQNSLNSSGNHH). A compositionally biased stretch (basic residues) spans 984–995 (SNYHGHNNHHHY). Positions 996–1021 (NNNNNNNNNNNNNNNNNNNNNNNGNG) are enriched in low complexity. Positions 1026-1044 (YYNNKYQQKSPQHQSSNSV) are enriched in polar residues. The segment covering 1047-1060 (IPPPGFSTIAPPPG) has biased composition (pro residues). The segment covering 1064-1087 (NNNNNNNNNNNNNNNKNNNSNNNN) has biased composition (low complexity). A compositionally biased stretch (polar residues) spans 1099–1108 (STLNNSQDDS). The segment covering 1110-1122 (QQEQEQQEQESQQ) has biased composition (low complexity).

This is an uncharacterized protein from Dictyostelium discoideum (Social amoeba).